Here is a 78-residue protein sequence, read N- to C-terminus: Mitotic-spindle organizing protein 1 (78 aa).

Position 2 is an N-acetylalanine (Ala2).

It belongs to the MOZART1 family. In terms of assembly, associates with the gamma-tubulin ring complex (gTuRC) consisting of TUBGCP2, TUBGCP3, TUBGCP4, TUBGCP5 and TUBGCP6 and gamma-tubulin TUBG1 or TUBG2; within the complex, interacts with TUBGCP3 and TUBGCP6 to form a luminal bridge with actin that stabilizes the initial structure during complex assembly. Interacts with TUBG1.

It localises to the cytoplasm. The protein localises to the cytoskeleton. The protein resides in the microtubule organizing center. It is found in the centrosome. Its subcellular location is the spindle. Required for the recruitment and the assembly of the gamma-tubulin ring complex (gTuRC) at the centrosome. The gTuRC regulates the minus-end nucleation of alpha-beta tubulin heterodimers that grow into microtubule protafilaments, a critical step in centrosome duplication and spindle formation. The sequence is that of Mitotic-spindle organizing protein 1 (Mzt1) from Mus musculus (Mouse).